The following is a 255-amino-acid chain: Cysteine protease avirulence protein AvrRpt2 (255 aa).

The segment at 1–50 (MKIAPVAINHSPLSREVPSHAAPTQAKQTNLQSEAGDLDARKSSASSPET) is disordered. The propeptide at 1 to 71 (MKIAPVAINH…RHKIEVPAFG (71 aa)) is removed in mature form. The tract at residues 70–71 (FG) is determinants of cleavage specificity. Residues 76-100 (KKSSKHETGGSSANADSSSVASDST) form a disordered region. The segment covering 86–98 (SSANADSSSVASD) has biased composition (low complexity). Catalysis depends on Cys-122, which acts as the Nucleophile. Residues His-208 and Asp-226 contribute to the active site.

Belongs to the peptidase C70 family. In terms of assembly, interacts physically with plant cell ROC1 (Arabidopsis single-domain cyclophilin) and RIN4. Post-translationally, autocleaved inside plant cells upon activation by cyclophilin. Cleavage is crucial in subcellular location and in eliciting HR. Inhibited by cyclosporin A (cyclophilin inhibitor).

The protein resides in the secreted. It is found in the host cell membrane. In terms of biological role, effector protein involved in gene-for-gene resistance in plants expressing RPS2. Its thiol protease activity is required for the degradation of plant cell RIN4 and consequent activation of RPS2 during bacterial infection. The activation of RPS2 is sufficient for the induction of hypersensitive response (HR) and plant resistance. Cleavage of RIN4 by AvrRpt2 also interferes with RPM1-mediated resistance activated by either AvrRpm1 or AvrB. Contributes to virulence in plants lacking the resistance protein RPS2 promoting pathogen growth and disease symptoms. Inhibits PAMP (pathogen-associated molecular patterns)-induced signaling compromising the host's basal defense system. Blocks plant callose deposition, flg22 (a peptide corresponding to the most conserved domain of flagellin) induced accumulation of PR-1, PR-2 and PR-5 and activation of GST6 transcription. The mechanism of virulence is unknown, but this activity is independent of ethylene and salicylic acid response pathways and independent of RIN4 disappearance. This is Cysteine protease avirulence protein AvrRpt2 (avrRpt2) from Pseudomonas syringae pv. tomato.